The chain runs to 535 residues: Arylsulfatase K (535 aa).

Residues 1–22 (MLLLWLSVFAASALAAPDRGAG) form the signal peptide. Ca(2+)-binding residues include D44 and C84. The active-site Nucleophile is C84. C84 is subject to 3-oxoalanine (Cys). The N-linked (GlcNAc...) asparagine glycan is linked to N112. Position 132 (K132) interacts with substrate. N197 is a glycosylation site (N-linked (GlcNAc...) asparagine). H255 serves as a coordination point for substrate. The N-linked (GlcNAc...) asparagine glycan is linked to N266. D317 and H318 together coordinate Ca(2+). N379, N417, and N502 each carry an N-linked (GlcNAc...) asparagine glycan.

It belongs to the sulfatase family. It depends on Ca(2+) as a cofactor. In terms of processing, the conversion to 3-oxoalanine (also known as C-formylglycine, FGly), of a serine or cysteine residue in prokaryotes and of a cysteine residue in eukaryotes, is critical for catalytic activity. Post-translationally, the 75-kDa precursor undergoes proteolytic processing to yield a 23 kDa form. N-glycosylated with both high mannose and complex type sugars.

The protein resides in the secreted. The protein localises to the lysosome. It carries out the reaction an aryl sulfate + H2O = a phenol + sulfate + H(+). The enzyme catalyses Hydrolysis of the 2-sulfate groups of the 2-O-sulfo-D-glucuronate residues of chondroitin sulfate, heparin and heparitin sulfate.. Catalyzes the hydrolysis of pseudosubstrates such as p-nitrocatechol sulfate and p-nitrophenyl sulfate. Catalyzes the hydrolysis of the 2-sulfate groups of the 2-O-sulfo-D-glucuronate residues of chondroitin sulfate, heparin and heparitin sulfate. Acts selectively on 2-sulfoglucuronate and lacks activity against 2-sulfoiduronate. The sequence is that of Arylsulfatase K (ARSK) from Canis lupus familiaris (Dog).